The following is an 89-amino-acid chain: Neurotoxin beta-KTx 12 (89 aa).

The signal sequence occupies residues 1 to 20; that stretch reads MKQYIFFLALIVLVSTFAEA. Residues 21-39 constitute a propeptide that is removed on maturation; that stretch reads GKKTEILDKVKKVFSKAKD. Residues 53–89 form the BetaSPN-type CS-alpha/beta domain; that stretch reads ELGCPFIDKWCEDHCESKKLVGKCENFDCSCVKLGGK. 3 disulfide bridges follow: Cys56–Cys76, Cys63–Cys81, and Cys67–Cys83.

This sequence belongs to the long chain scorpion toxin family. Class 2 subfamily. In terms of tissue distribution, expressed by the venom gland.

Its subcellular location is the secreted. In terms of biological role, inhibits voltage-gated potassium channel. The chain is Neurotoxin beta-KTx 12 from Lychas mucronatus (Chinese swimming scorpion).